A 1074-amino-acid polypeptide reads, in one-letter code: Pleckstrin homology domain-containing family M member 1 (1074 aa).

The region spanning 40–182 (TSEDGDANTM…LSFELSYKSA (143 aa)) is the RUN domain. Disordered stretches follow at residues 214–244 (QRKE…RRNR), 272–336 (LQEN…MFQT), and 382–454 (DEKQ…PPQE). S218 carries the phosphoserine modification. 2 stretches are compositionally biased toward polar residues: residues 313-329 (SKAQ…NQEP) and 393-404 (PAQSTSDQQPSS). 3 positions are modified to phosphoserine: S433, S436, and S491. The interval 506–526 (GNAQPAPAPAPAPAPAPAPAP) is disordered. The span at 511–525 (APAPAPAPAPAPAPA) shows a compositional bias: pro residues. A PH 1 domain is found at 551–642 (GLMKLGTVAR…WLDRVREALQ (92 aa)). Residues 649–655 (EDEWVNI) carry the LIR motif. Residues 661 to 680 (AEDAPEAPPDSLPPYSTLLP) are disordered. The interaction with RAB7A stretch occupies residues 672–1074 (LPPYSTLLPE…RKYQEQNVVS (403 aa)). One can recognise a PH 2 domain in the interval 701 to 795 (DAIKESLLYL…WRDLVRKVLA (95 aa)). The Phorbol-ester/DAG-type zinc-finger motif lies at 1004–1058 (QHVYHCDLCTQRGFICQICHHQDIIFPFEFDTTVRCAECRTVFHQSCQAVVRKGC).

As to quaternary structure, interacts (via N- and C-terminus) with RAB7A (GTP-bound form). Simultaneously interacts with RAB7A and ARL8B; bringing about clustering and fusion of late endosomes and lysosomes. Interacts (via RUN domain) with ARL8B (GTP-bound form); the interaction is required for PLEKHM1 localization to lysosomes and for ARL8B function in delivery and degradation of endocytic and autophagic cargo in lysosomes. PLEKHM1 and PLEKHM2 compete for interaction with ARL8B. Interacts with ARL8A; the interaction is weaker than with ARL8B. Interacts with VPS41, VPS11, VPS18, VPS33A and VPS39; indicative for an association with the HOPS complex; the interactions with, at least, VPS41, VPS11, VPS18 and VPS33A require ARL8B. Interacts with GABARAP, GABARAPL, GABARAPL2, MAP1LC3A, MAP1LC3B and MAP1LC3C. Interacts with PAFAH1B. Interacts (via N- and C-terminus) with NDEL1. Interacts (via C-terminus) with MAP3K7. Interacts (via N- and C-terminus) with FAM98A. Interacts (via C-terminus) with DEF8; this interaction is weak but increased in a RAB7A-dependent manner. May interact with sialyl-lex-positive protein.

Its subcellular location is the autolysosome membrane. It is found in the endosome membrane. The protein resides in the late endosome membrane. It localises to the lysosome membrane. Functionally, acts as a multivalent adapter protein that regulates Rab7-dependent and HOPS complex-dependent fusion events in the endolysosomal system and couples autophagic and the endocytic trafficking pathways. Acts as a dual effector of RAB7A and ARL8B that simultaneously binds these GTPases, bringing about clustering and fusion of late endosomes and lysosomes. Required for late stages of endolysosomal maturation, facilitating both endocytosis-mediated degradation of growth factor receptors and autophagosome clearance. Interaction with Arl8b is a crucial factor in the terminal maturation of autophagosomes and to mediate autophagosome-lysosome fusion. Positively regulates lysosome peripheral distribution and ruffled border formation in osteoclasts. May be involved in negative regulation of endocytic transport from early endosome to late endosome/lysosome implicating its association with Rab7. May have a role in sialyl-lex-mediated transduction of apoptotic signals. Involved in bone resorption. This is Pleckstrin homology domain-containing family M member 1 from Mus musculus (Mouse).